The sequence spans 475 residues: Tubulin gamma chain (475 aa).

142–148 (AGGTGSG) contacts GTP. Residues 455–475 (GKQVSGEGNTSGTVDSRVGAS) form a disordered region.

Belongs to the tubulin family.

The protein resides in the cytoplasm. Its subcellular location is the cytoskeleton. It localises to the microtubule organizing center. Functionally, tubulin is the major constituent of microtubules. The gamma chain is found at microtubule organizing centers (MTOC) such as the spindle poles, suggesting that it is involved in the minus-end nucleation of microtubule assembly. This Physcomitrium patens (Spreading-leaved earth moss) protein is Tubulin gamma chain (TUBG1).